The chain runs to 200 residues: uncharacterized protein (200 aa).

In terms of biological role, involved in osmoadaptation. This is an uncharacterized protein from Emericella nidulans (strain FGSC A4 / ATCC 38163 / CBS 112.46 / NRRL 194 / M139) (Aspergillus nidulans).